A 189-amino-acid polypeptide reads, in one-letter code: Phosphoheptose isomerase (189 aa).

The 156-residue stretch at 34–189 folds into the SIS domain; that stretch reads LVAALKGGKK…CDLVEKGLFK (156 aa). 49-51 serves as a coordination point for substrate; sequence NGG. His-58 and Glu-62 together coordinate Zn(2+). Substrate is bound by residues Glu-62, 91–92, 117–119, Ser-122, and Gln-169; these read ND and STS. Zn(2+) is bound by residues Gln-169 and His-177.

This sequence belongs to the SIS family. GmhA subfamily. Homotetramer. Zn(2+) is required as a cofactor.

It localises to the cytoplasm. The catalysed reaction is 2 D-sedoheptulose 7-phosphate = D-glycero-alpha-D-manno-heptose 7-phosphate + D-glycero-beta-D-manno-heptose 7-phosphate. The protein operates within carbohydrate biosynthesis; D-glycero-D-manno-heptose 7-phosphate biosynthesis; D-glycero-alpha-D-manno-heptose 7-phosphate and D-glycero-beta-D-manno-heptose 7-phosphate from sedoheptulose 7-phosphate: step 1/1. Catalyzes the isomerization of sedoheptulose 7-phosphate in D-glycero-D-manno-heptose 7-phosphate. In Geobacter metallireducens (strain ATCC 53774 / DSM 7210 / GS-15), this protein is Phosphoheptose isomerase.